The sequence spans 313 residues: Ribosomal RNA small subunit methyltransferase H (313 aa).

Residues 36 to 38, Asp56, Phe80, Asp102, and Gln109 each bind S-adenosyl-L-methionine; that span reads GGH.

Belongs to the methyltransferase superfamily. RsmH family.

It localises to the cytoplasm. It catalyses the reaction cytidine(1402) in 16S rRNA + S-adenosyl-L-methionine = N(4)-methylcytidine(1402) in 16S rRNA + S-adenosyl-L-homocysteine + H(+). Specifically methylates the N4 position of cytidine in position 1402 (C1402) of 16S rRNA. The chain is Ribosomal RNA small subunit methyltransferase H from Actinobacillus pleuropneumoniae serotype 3 (strain JL03).